Reading from the N-terminus, the 76-residue chain is Toxin Acra III-2 (76 aa).

The region spanning 3–67 (VPGNYPLNTY…IWDAVKNHCT (65 aa)) is the LCN-type CS-alpha/beta domain. Disulfide bonds link Cys18–Cys41, Cys27–Cys46, and Cys31–Cys48.

Belongs to the long (3 C-C) scorpion toxin superfamily. Sodium channel inhibitor family. Beta subfamily. Expressed by the venom gland.

The protein localises to the secreted. Functionally, binds to sodium channels (Nav) and affects the channel activation process. The polypeptide is Toxin Acra III-2 (Androctonus crassicauda (Arabian fat-tailed scorpion)).